Here is a 181-residue protein sequence, read N- to C-terminus: uncharacterized protein (181 aa).

This is an uncharacterized protein from Borreliella burgdorferi (strain ATCC 35210 / DSM 4680 / CIP 102532 / B31) (Borrelia burgdorferi).